The sequence spans 64 residues: Delta-buthitoxin-Hj2a (64 aa).

4 disulfides stabilise this stretch: Cys12–Cys63, Cys16–Cys36, Cys22–Cys46, and Cys26–Cys48. Arg64 bears the Arginine amide mark.

It belongs to the long (4 C-C) scorpion toxin superfamily. Sodium channel inhibitor family. Alpha subfamily. In terms of tissue distribution, expressed by the venom gland.

It is found in the secreted. In terms of biological role, this non-amidated recombinant toxin slows fast inactivation on Nav1.1/SCN1A (EC(50)=52.8 nM), Nav1.4/SN4A (EC(50)=32 nM), Nav1.5/SCN5A (EC(50)=116.7 nM), Nav1.6/SCN8A (EC(50)=46.3 nM), and Nav1.7/SCN9A (EC(50)=147.4 nM) voltage-gated sodium channels. On Nav1.1/SCN1A channel, acts as an agonist by inducing a shift in both the voltage dependence of channel inactivation (alpha-toxin activity) and activation (beta-toxin activity). The protein is Delta-buthitoxin-Hj2a of Hottentotta judaicus (Black scorpion).